Reading from the N-terminus, the 1329-residue chain is BRCT domain-containing protein At4g02110 (1329 aa).

BRCT domains follow at residues 7–97 (LPPK…SILY) and 104–194 (NGIP…DYEI). Disordered regions lie at residues 295 to 378 (ANKT…SMER), 393 to 470 (GEEF…TSEL), 576 to 645 (EVPE…SPTD), 745 to 827 (NDVP…ADGK), and 952 to 1077 (AKKE…KESK). Polar residues-rich tracts occupy residues 323–335 (SLAT…LQRS) and 363–378 (SAFN…SMER). 2 stretches are compositionally biased toward basic and acidic residues: residues 410–422 (VSRK…HHNS) and 600–611 (RMKDKQETELTT). A compositionally biased stretch (basic residues) spans 793 to 802 (GKSRVKKTKI). Composition is skewed to basic and acidic residues over residues 818–827 (DGGDNSADGK) and 971–983 (DDNK…EGIV). The segment covering 986–1004 (SSLQSGKKGSSSRVEVGKS) has biased composition (low complexity). Basic and acidic residues predominate over residues 1024–1047 (VMKDVGDNSAKEKENIAVDNESRK). A BRCT 3 domain is found at 1090–1181 (FQDQEHEPKF…KLLQEEPYEW (92 aa)).

This chain is BRCT domain-containing protein At4g02110, found in Arabidopsis thaliana (Mouse-ear cress).